The following is a 435-amino-acid chain: Probable exopolygalacturonase X (435 aa).

Residues 1–22 form the signal peptide; the sequence is MRLTHVLSHTLGLLALGATAEA. Residues 31–55 are disordered; it reads CSPKKPFRPLPTSSSRDKTCHVRSH. A compositionally biased stretch (basic and acidic residues) spans 45-55; that stretch reads SRDKTCHVRSH. 4 N-linked (GlcNAc...) asparagine glycosylation sites follow: Asn93, Asn112, Asn128, and Asn198. PbH1 repeat units follow at residues 199–229 and 230–251; these read SSNVLFDGIDISGYSKSDNEAKNTDGWDTYR and SNNIVIQNSVINNGDDCVSFKP. Asp244 serves as the catalytic Proton donor. A disulfide bond links Cys246 and Cys263. Residues Asn252 and Asn264 are each glycosylated (N-linked (GlcNAc...) asparagine). The PbH1 3 repeat unit spans residues 253–273; it reads STNILVQNLHCNGSHGISVGS. His267 is a catalytic residue. N-linked (GlcNAc...) asparagine glycans are attached at residues Asn291, Asn296, Asn328, and Asn353. Residues 326–347 form a PbH1 4 repeat; the sequence is VKNITYDTALIDNVDWAIEITQ. Residues 361–409 form a PbH1 5 repeat; the sequence is PSSLTISDVHIKNFRGTTSGSEDPYVGTIVCSSPDTCSDIYTSNINVTS. Cys391 and Cys397 form a disulfide bridge. N-linked (GlcNAc...) asparagine glycans are attached at residues Asn406 and Asn429.

The protein belongs to the glycosyl hydrolase 28 family.

Its subcellular location is the secreted. It catalyses the reaction [(1-&gt;4)-alpha-D-galacturonosyl](n) + H2O = alpha-D-galacturonate + [(1-&gt;4)-alpha-D-galacturonosyl](n-1). In terms of biological role, specific in hydrolyzing the terminal glycosidic bond of polygalacturonic acid and oligogalacturonates. The polypeptide is Probable exopolygalacturonase X (pgaX) (Aspergillus niger (strain ATCC MYA-4892 / CBS 513.88 / FGSC A1513)).